A 313-amino-acid chain; its full sequence is MSSSSSSSASSAAAAAFRPAVVQREQQVVEEKFPAAAAAMREMVLPPVAAAAADSEQEQLCYVHCHYCDTVLVVSVPSSSLFETVTVRCGHCSSLLTVNMRGLLLPTTAAAAPPPPPPPPPPPPPPAAHFPHSLNLAPANPPHHHSLLDEISTANSPTQLLLEQHGLGGLMASAASCRNNNSPAAAAAPPPPTSQGKAAAKEPSPRTNTAVINRPPEKRQRVPSAYNRFIKDEIQRIKAGNPDISHREAFSAAAKNWAHFPHIHFGLMPDHQGLKKTSLLPQDHQRKDGLLKEGLYAAAAAAAAAANMGVAPY.

The segment at 65-92 (CHYCDTVLVVSVPSSSLFETVTVRCGHC) adopts a C4-type zinc-finger fold. Disordered stretches follow at residues 107–149 (TTAA…SLLD) and 180–221 (NNSP…KRQR). Positions 112–128 (APPPPPPPPPPPPPPAA) are enriched in pro residues.

Belongs to the YABBY family. Expressed in shoot apex and young inflorescences.

It is found in the nucleus. This chain is Protein YABBY 3 (YAB3), found in Oryza sativa subsp. japonica (Rice).